We begin with the raw amino-acid sequence, 274 residues long: 2,3,4,5-tetrahydropyridine-2,6-dicarboxylate N-succinyltransferase (274 aa).

The protein belongs to the transferase hexapeptide repeat family.

The protein localises to the cytoplasm. The enzyme catalyses (S)-2,3,4,5-tetrahydrodipicolinate + succinyl-CoA + H2O = (S)-2-succinylamino-6-oxoheptanedioate + CoA. The protein operates within amino-acid biosynthesis; L-lysine biosynthesis via DAP pathway; LL-2,6-diaminopimelate from (S)-tetrahydrodipicolinate (succinylase route): step 1/3. The protein is 2,3,4,5-tetrahydropyridine-2,6-dicarboxylate N-succinyltransferase of Escherichia coli (strain SMS-3-5 / SECEC).